Here is a 168-residue protein sequence, read N- to C-terminus: Small ribosomal subunit protein uS8 (168 aa).

Positions 59-93 (EEYKKMKELAEKSPNPKMKRYLKQLEEYNKGTQYP) are not found in other S8 sequences.

Belongs to the universal ribosomal protein uS8 family. Part of the 30S ribosomal subunit. Contacts proteins S5 and S12.

Its function is as follows. One of the primary rRNA binding proteins, it binds directly to 16S rRNA central domain where it helps coordinate assembly of the platform of the 30S subunit. This Aquifex aeolicus (strain VF5) protein is Small ribosomal subunit protein uS8.